The chain runs to 567 residues: MVEEISPKYTNEQAEASSSSSSSVSGEPKDFSGSLENQEDLGELIERTNTMTSGAESKVETNRRMSRILTGTQDDPEKIAIDYSNCPPMGGDRPFPPALPEQSQFEVTFDGPNDPIHPFNWSMKTKTIICIVLCLNCICISMGSSIFASGVPQICKIYHVIPVVAILGVTLYVFGFAASPVIYAPLSEVYGRRGVLVISAFGFAVFQFAVATSKDLQSIMICRFFGGLIGAAPMAVVPAAFADMFDVRVRGKAICLFSLGVFVGPILSPVMGSYIAQRTTWRWLEYVTGCFASALFVAVALTFKETHHPTILVQKAKEMRKSTNNWGIHAAHEHVELSVSEIAKKTITRPIKMLFTEPLLLIITIYNSFVYGILYLMLEAYPIVFVEGYGFEANGELPYIALIIGMLVCTAFLWYFENDYLKRIQKAGKLVPEARLIPMVYAGVIFPIGILWFCWTGYYPHKIHWMCPTVAGSFIGFGLMGIFLPCLNYIIESYLPLAASAVAANTFMRSAFGAVFPLFAGYMFHGMGTGWAGLLLGLFAAALIPVPLFFLKYGERIRKNSKDAYYA.

Residues 1-71 (MVEEISPKYT…NRRMSRILTG (71 aa)) form a disordered region. Residue asparagine 120 is glycosylated (N-linked (GlcNAc...) asparagine). Helical transmembrane passes span 128–148 (IICIVLCLNCICISMGSSIFA), 157–177 (IYHVIPVVAILGVTLYVFGFA), 194–214 (GVLVISAFGFAVFQFAVATSK), 224–244 (FFGGLIGAAPMAVVPAAFADM), 253–273 (AICLFSLGVFVGPILSPVMGS), 283–303 (WLEYVTGCFASALFVAVALTF), 358–378 (PLLLIITIYNSFVYGILYLML), 396–416 (ELPYIALIIGMLVCTAFLWYF), 436–456 (LIPMVYAGVIFPIGILWFCWT), 471–491 (AGSFIGFGLMGIFLPCLNYII), 498–520 (AASAVAANTFMRSAFGAVFPLFA), and 531–551 (WAGLLLGLFAAALIPVPLFFL).

The protein belongs to the major facilitator superfamily. DHA1 family. Polyamines/proton antiporter (TC 2.A.1.2.16) subfamily.

The protein resides in the cell membrane. Its function is as follows. Multidrug resistance transporter involved in resistance to azole antifungal drugs such as the imidazoles miconazole, ketoconazole, and tioconazole; as well as the triazoles itraconazole and fluconazole. Also plays a role in the resistance to other antifungal drug families such as the polyene amphotericin B, the pyrimide analog flucytosine, the fungicide mancozeb, and the polyamine spermine. Decreases the intracellular accumulation of clotrimazole by mediating its extrusion from cells. Involved in virulence by conferring resistance to the human antimicrobial peptide histatin-5. The sequence is that of Multidrug transporter TPO1_1 from Candida glabrata (strain ATCC 2001 / BCRC 20586 / JCM 3761 / NBRC 0622 / NRRL Y-65 / CBS 138) (Yeast).